An 86-amino-acid chain; its full sequence is V-type proton ATPase subunit e (86 aa).

Residues 1 to 21 (MGILIPLVSVSAFWAIIGFGG) form a helical membrane-spanning segment. The Cytoplasmic portion of the chain corresponds to 22–32 (PWIVPKGPNRG). A helical transmembrane segment spans residues 33 to 53 (IIQLMIIMTAVCCWMFWIMVF). Residues 54–86 (LHQLNPLIGPQINVKTIRWISEKWGDAPNVINN) are Lumenal-facing.

The protein belongs to the V-ATPase e1/e2 subunit family. In terms of assembly, V-ATPase is a heteromultimeric enzyme made up of two complexes: the ATP-hydrolytic V1 complex and the proton translocation V0 complex. The V1 complex consists of three catalytic AB heterodimers that form a heterohexamer, three peripheral stalks each consisting of EG heterodimers, one central rotor including subunits D and F, and the regulatory subunits C and H. The proton translocation complex V0 consists of the proton transport subunit a, a ring of proteolipid subunits c9c'', rotary subunit d, subunits e and f, and the accessory subunits vah-19/Ac45 and vah-20/PRR.

Its subcellular location is the apical cell membrane. Its function is as follows. Subunit of the V0 complex of vacuolar(H+)-ATPase (V-ATPase), a multisubunit enzyme composed of a peripheral complex (V1) that hydrolyzes ATP and a membrane integral complex (V0) that translocates protons. V-ATPase is responsible for acidifying and maintaining the pH of intracellular compartments and in some cell types, is targeted to the plasma membrane, where it is responsible for acidifying the extracellular environment. During embryonic development, the V-ATPase is required to repress fusion of epidermal cells probably by negatively regulating eff-1-mediated cell fusion. The protein is V-type proton ATPase subunit e of Caenorhabditis elegans.